The sequence spans 867 residues: Protein translocase subunit SecA (867 aa).

ATP contacts are provided by residues Gln85, 103-107 (GEGKT), and Asp491.

This sequence belongs to the SecA family. In terms of assembly, monomer and homodimer. Part of the essential Sec protein translocation apparatus which comprises SecA, SecYEG and auxiliary proteins SecDF. Other proteins may also be involved.

The protein localises to the cell membrane. Its subcellular location is the cytoplasm. The catalysed reaction is ATP + H2O + cellular proteinSide 1 = ADP + phosphate + cellular proteinSide 2.. Functionally, part of the Sec protein translocase complex. Interacts with the SecYEG preprotein conducting channel. Has a central role in coupling the hydrolysis of ATP to the transfer of proteins into and across the cell membrane, serving as an ATP-driven molecular motor driving the stepwise translocation of polypeptide chains across the membrane. This is Protein translocase subunit SecA from Mycoplasmopsis pulmonis (strain UAB CTIP) (Mycoplasma pulmonis).